The chain runs to 217 residues: Nitrile hydratase subunit beta (217 aa).

This sequence belongs to the nitrile hydratase subunit beta family. As to quaternary structure, heterodimer of an alpha and a beta chain.

It catalyses the reaction an aliphatic primary amide = an aliphatic nitrile + H2O. Its function is as follows. NHase catalyzes the hydration of various nitrile compounds to the corresponding amides. The chain is Nitrile hydratase subunit beta (nthB) from Pseudomonas putida (Arthrobacter siderocapsulatus).